A 291-amino-acid polypeptide reads, in one-letter code: Beta-lactamase CTX-M-8 (291 aa).

The signal sequence occupies residues Met-1 to Ala-30. Catalysis depends on Ser-73, which acts as the Nucleophile; acyl-ester intermediate. Residues Lys-76, Ser-133, Glu-169, and Ser-240 each coordinate a beta-lactam.

This sequence belongs to the class-A beta-lactamase family. Monomer.

Its subcellular location is the secreted. It catalyses the reaction a beta-lactam + H2O = a substituted beta-amino acid. Inhibited by the beta-lactamase-blocking agents clavulanic acid, tazobactam and sulbactam; in the DH5alpha strain of E.coli. Functionally, extended-spectrum beta-lactamase (ESBL) which confers resistance to penicillins, as well as first, third and fourth-generation cephalosporins. Has cefotaxime-hydrolyzing activity. Inactive against cephalosporin antibiotic, cefoxitin, and the carbapenem, imipenem. The sequence is that of Beta-lactamase CTX-M-8 from Citrobacter amalonaticus.